A 331-amino-acid polypeptide reads, in one-letter code: T-cell acute lymphocytic leukemia protein 1 (331 aa).

The segment covering 1–22 (MTERPPSEAARSDPQLEGRDAA) has biased composition (basic and acidic residues). 2 disordered regions span residues 1-27 (MTER…ASMA) and 40-86 (ETSR…EARH). Phosphoserine is present on S12. Residues 56-70 (ARGGPGGGPAGGGGA) show a composition bias toward gly residues. The segment covering 72–86 (RDLKGRDAATAEARH) has biased composition (basic and acidic residues). Phosphoserine occurs at positions 122 and 172. One can recognise a bHLH domain in the interval 187-239 (VRRIFTNSRERWRQQNVNGAFAELRKLIPTHPPDKKLSKNEILRLAMKYINFL). Residues 249–331 (EGTQRAKTGK…LPAADGAGPR (83 aa)) form a disordered region. Residues 263–275 (GAGGGGGGGGGGA) show a composition bias toward gly residues.

In terms of assembly, efficient DNA binding requires dimerization with another bHLH protein. Forms heterodimers with TCF3. Binds to the LIM domain containing protein LMO2 and to DRG1. Can assemble in a complex with LDB1 and LMO2. Component of a TAL-1 complex composed at least of CBFA2T3, LDB1, TAL1 and TCF3. Interacts with SBNO2; this interaction inhibits TAL1 occupancy of the DCSTAMP promoter, leading to the activation of the DCSTAMP promoter by the transcription factor MITF. In terms of processing, phosphorylated on serine residues. Phosphorylation of Ser-122 is strongly stimulated by hypoxia. Ubiquitinated; subsequent to hypoxia-dependent phosphorylation of Ser-122, ubiquitination targets the protein for rapid degradation via the ubiquitin system. This process may be characteristic for microvascular endothelial cells, since it could not be observed in large vessel endothelial cells. In terms of tissue distribution, leukemic stem cell.

The protein localises to the nucleus. In terms of biological role, implicated in the genesis of hemopoietic malignancies. It may play an important role in hemopoietic differentiation. Serves as a positive regulator of erythroid differentiation. This chain is T-cell acute lymphocytic leukemia protein 1 (TAL1), found in Homo sapiens (Human).